Here is a 193-residue protein sequence, read N- to C-terminus: CDP-diacylglycerol--glycerol-3-phosphate 3-phosphatidyltransferase (193 aa).

The next 4 membrane-spanning stretches (helical) occupy residues 8 to 28 (ITLA…APFD), 39 to 59 (IPVA…TDWV), 88 to 108 (AALI…IVII), and 157 to 177 (LVSF…TVVS).

The protein belongs to the CDP-alcohol phosphatidyltransferase class-I family.

It is found in the cell membrane. It carries out the reaction a CDP-1,2-diacyl-sn-glycerol + sn-glycerol 3-phosphate = a 1,2-diacyl-sn-glycero-3-phospho-(1'-sn-glycero-3'-phosphate) + CMP + H(+). Its pathway is phospholipid metabolism; phosphatidylglycerol biosynthesis; phosphatidylglycerol from CDP-diacylglycerol: step 1/2. In terms of biological role, this protein catalyzes the committed step to the synthesis of the acidic phospholipids. This chain is CDP-diacylglycerol--glycerol-3-phosphate 3-phosphatidyltransferase (pgsA), found in Bacillus subtilis (strain 168).